The primary structure comprises 745 residues: MLHELLLALLGFTGDLIVDEREQRKTLGLAFNSDSPLSDECTFKLAPDISFIEPSERDLIERLIKLGFYYRELDRFAKKSRNLSWIRSVTSVHPLERADELSKQSREKKPSVYRRAIANGIGEILSVYRSAVLHIEQKLLAETTPILATVTEGLNKFFVLFPPLYEVILEIERDDIRGGQLLNVLNKRCHCGVPELRTCLQRLLWNGHQVMYNQLAAWMVYGILQDPHGEFFIKRQDDGDLDHRSSQEEVSEKLARTSVHETSLTDWHSGFHISLDMLPDYIPMRLGESILFAGKAIRVLRNPSPAFQFQKDKSFQQTMRGSQRIRGFMHSDFPETETELDADLTGGELLPQSEADKIEAMLKDLKESSEFHKRSFECTVDSVRAIAASHLWQLVVVRADLNGHLKALKDYFLLEKGDFFQCFLEESRQLMRLPPRQSTGESDLMVPFQLAATKTIAEEDKYFSRVSLRMPSFGVTVRSSQADMVRSKVSLTGKANLTSDTSVDGWDAIALEYSVDWPMQLFFTQEVLSKYLKVFQYLIRLKRTQMELEKSWASVMHQDHIESAQHRKDGLNGSTSQQRRQGIRPMWRVREHMAFLIRNLQFYIQVDVIESQWKVLQTHIHDSQDFTELVGFHQEYLSALISQSFLDIGSVSRILDSIMKLCLQFCWNIENQESNPNTSELENIAEEFNKKSNSLYTILRSSKLAGSQRAPFLRRFLLRLNFNSFYEATARGVLNVVRQRPALPL.

Belongs to the TUBGCP family. Gamma-tubulin complex is composed of gamma-tubulin and GCP proteins.

The protein localises to the cytoplasm. It is found in the cytoskeleton. The protein resides in the microtubule organizing center. It localises to the spindle. Its function is as follows. Gamma-tubulin complex is necessary for microtubule nucleation at the microtubule organizing centers (MTOCs). In terms of biological role, gamma-tubulin complex is essential for the control of microtubular network remodeling in the course of initiation and development of giant-feeding cells, and for the successful reproduction of nematodes (e.g. Meloidogyne spp.) in their plant hosts. This Arabidopsis thaliana (Mouse-ear cress) protein is Gamma-tubulin complex component 4 (GCP4).